We begin with the raw amino-acid sequence, 168 residues long: Transcription antitermination protein NusB (168 aa).

Residues Arg-147–Lys-168 are disordered. Residues Ser-158 to Lys-168 are compositionally biased toward basic and acidic residues.

This sequence belongs to the NusB family.

In terms of biological role, involved in transcription antitermination. Required for transcription of ribosomal RNA (rRNA) genes. Binds specifically to the boxA antiterminator sequence of the ribosomal RNA (rrn) operons. The polypeptide is Transcription antitermination protein NusB (Chlorobium phaeobacteroides (strain BS1)).